The following is a 152-amino-acid chain: Zinc finger SWIM domain-containing protein 7 (152 aa).

Residues 76 to 114 (YTCLASCHYCSCPAFSFSVLRKSDSLLCKHLLAIYLSQL) form an SWIM-type zinc finger.

Belongs to the SWS1 family. Interacts with RAD51D and XRCC3; involved in homologous recombination repair. Interacts with SWSAP1; they form a functional complex involved in homologous recombination repair and stabilize each other.

It localises to the nucleus. Its function is as follows. Involved in early stages of the homologous recombination repair (HRR) pathway of double-stranded DNA breaks arising during DNA replication or induced by DNA-damaging agents. Required for meiotic progression, hence for fertility. This is Zinc finger SWIM domain-containing protein 7 (Zswim7) from Mus musculus (Mouse).